Reading from the N-terminus, the 756-residue chain is 5-methyltetrahydropteroyltriglutamate--homocysteine methyltransferase (756 aa).

5-methyltetrahydropteroyltri-L-glutamate contacts are provided by residues 16 to 19 and Lys-116; that span reads RELK. L-homocysteine contacts are provided by residues 435–437 and Glu-488; that span reads IGS. Residues 435 to 437 and Glu-488 each bind L-methionine; that span reads IGS. Residues 519 to 520 and Trp-565 each bind 5-methyltetrahydropteroyltri-L-glutamate; that span reads RC. An L-homocysteine-binding site is contributed by Asp-603. Asp-603 contacts L-methionine. Glu-609 serves as a coordination point for 5-methyltetrahydropteroyltri-L-glutamate. Residues His-645, Cys-647, and Glu-669 each coordinate Zn(2+). His-698 (proton donor) is an active-site residue. Cys-730 contributes to the Zn(2+) binding site.

It belongs to the vitamin-B12 independent methionine synthase family. The cofactor is Zn(2+).

The enzyme catalyses 5-methyltetrahydropteroyltri-L-glutamate + L-homocysteine = tetrahydropteroyltri-L-glutamate + L-methionine. The protein operates within amino-acid biosynthesis; L-methionine biosynthesis via de novo pathway; L-methionine from L-homocysteine (MetE route): step 1/1. Its function is as follows. Catalyzes the transfer of a methyl group from 5-methyltetrahydrofolate to homocysteine resulting in methionine formation. The protein is 5-methyltetrahydropteroyltriglutamate--homocysteine methyltransferase of Marinobacter nauticus (strain ATCC 700491 / DSM 11845 / VT8) (Marinobacter aquaeolei).